The following is a 104-amino-acid chain: MADASIQIEVVYASVQRQVLKTVDVPTGSSVRQALALSGIDKEFPELDLSQCAVGIFGKVVTDPAARVLEAGERIEIYRLLVADPMEIRRLRAARAREKRGLPG.

It belongs to the UPF0125 (RnfH) family.

The protein is Protein RnfH of Pseudomonas syringae pv. syringae (strain B728a).